The following is a 418-amino-acid chain: Zinc finger protein 566 (418 aa).

The region spanning 6–77 (VMFSDVSVDF…DRELTRGQWP (72 aa)) is the KRAB domain. The segment at 169–193 (KFCASKEYRKTFRHGSQFATHEIIH) adopts a C2H2-type 1; degenerate zinc-finger fold. 7 consecutive C2H2-type zinc fingers follow at residues 199–221 (YECKECGKSFRHPSRLTHHQKIH), 227–249 (FECKECGKTFICGSDLTRHHRIH), 255–277 (YECKECGKAFSSGSNFTRHQRIH), 283–305 (YECKECGKAFSSGSNFTQHQRIH), 311–333 (YECKECGNAFSQSSQLIKHQRIH), 339–361 (YECKECEKAFRSGSDLTRHQRIH), and 367–389 (YECKICGKAYSQSSQLISHHRIH). Residues Lys-314 and Lys-328 each participate in a glycyl lysine isopeptide (Lys-Gly) (interchain with G-Cter in SUMO2) cross-link.

The protein belongs to the krueppel C2H2-type zinc-finger protein family.

It is found in the nucleus. Its function is as follows. May be involved in transcriptional regulation. The sequence is that of Zinc finger protein 566 (ZNF566) from Homo sapiens (Human).